We begin with the raw amino-acid sequence, 45 residues long: Large ribosomal subunit protein bL34 (45 aa).

It belongs to the bacterial ribosomal protein bL34 family.

This Streptomyces avermitilis (strain ATCC 31267 / DSM 46492 / JCM 5070 / NBRC 14893 / NCIMB 12804 / NRRL 8165 / MA-4680) protein is Large ribosomal subunit protein bL34.